The sequence spans 237 residues: Keratin-associated protein 5-5 (237 aa).

Tandem repeats lie at residues 62–65, 68–71, 74–77, 159–162, 178–181, 188–191, 198–201, and 227–230. Residues 62–230 form an 8 X 4 AA repeats of C-C-X-P region; sequence CCVPVCCCKP…CCCQSSCCVP (169 aa).

This sequence belongs to the KRTAP type 5 family. Interacts with hair keratins. As to expression, restricted to hair root, not detected in any other tissues.

Functionally, in the hair cortex, hair keratin intermediate filaments are embedded in an interfilamentous matrix, consisting of hair keratin-associated protein (KRTAP), which are essential for the formation of a rigid and resistant hair shaft through their extensive disulfide bond cross-linking with abundant cysteine residues of hair keratins. The matrix proteins include the high-sulfur and high-glycine-tyrosine keratins. The polypeptide is Keratin-associated protein 5-5 (KRTAP5-5) (Homo sapiens (Human)).